Consider the following 439-residue polypeptide: tRNA modification GTPase MnmE (439 aa).

Positions 20, 78, and 116 each coordinate (6S)-5-formyl-5,6,7,8-tetrahydrofolate. The TrmE-type G domain maps to 211–364 (GIYVAILGEP…LLSAIQKKVE (154 aa)). Residues 221–226 (NSGKST), 240–246 (SEYAGTT), and 265–268 (DTAG) contribute to the GTP site. 2 residues coordinate Mg(2+): S225 and T246. K439 lines the (6S)-5-formyl-5,6,7,8-tetrahydrofolate pocket.

Belongs to the TRAFAC class TrmE-Era-EngA-EngB-Septin-like GTPase superfamily. TrmE GTPase family. Homodimer. Heterotetramer of two MnmE and two MnmG subunits. The cofactor is K(+).

It is found in the cytoplasm. Functionally, exhibits a very high intrinsic GTPase hydrolysis rate. Involved in the addition of a carboxymethylaminomethyl (cmnm) group at the wobble position (U34) of certain tRNAs, forming tRNA-cmnm(5)s(2)U34. This Ehrlichia ruminantium (strain Gardel) protein is tRNA modification GTPase MnmE.